The sequence spans 148 residues: Glutamyl-tRNA(Gln) amidotransferase subunit C, mitochondrial (148 aa).

This sequence belongs to the GatC family. In terms of assembly, subunit of the heterotrimeric GatCAB amidotransferase (AdT) complex, composed of A, B and C subunits.

It is found in the mitochondrion. The enzyme catalyses L-glutamyl-tRNA(Gln) + L-glutamine + ATP + H2O = L-glutaminyl-tRNA(Gln) + L-glutamate + ADP + phosphate + H(+). In terms of biological role, allows the formation of correctly charged Gln-tRNA(Gln) through the transamidation of misacylated Glu-tRNA(Gln) in the mitochondria. The reaction takes place in the presence of glutamine and ATP through an activated gamma-phospho-Glu-tRNA(Gln). The protein is Glutamyl-tRNA(Gln) amidotransferase subunit C, mitochondrial of Drosophila simulans (Fruit fly).